The sequence spans 242 residues: Ras-like protein family member 11A (242 aa).

The interval 17–241 (ESSSDYLLPK…SPKVKAPSAL (225 aa)) is small GTPase-like. GTP is bound by residues 34 to 41 (GAGRVGKS), 81 to 85 (DTPGG), and 147 to 150 (NKGD).

This sequence belongs to the small GTPase superfamily. Ras family. In terms of assembly, interacts with UBF/UBTF. Widely expressed. Down-regulated in prostate tumors compared to normal prostate tissue. High levels found in colon tumor and normal colon tissue followed by small intestine, liver, jejunum, ileum, bladder and aorta. Lowest levels observed in endothelial cells.

It localises to the nucleus. The protein localises to the nucleolus. The catalysed reaction is GTP + H2O = GDP + phosphate + H(+). In terms of biological role, regulator of rDNA transcription. Acts in cooperation UBF/UBTF and positively regulates RNA polymerase I transcription. The protein is Ras-like protein family member 11A of Homo sapiens (Human).